Here is a 528-residue protein sequence, read N- to C-terminus: Na(+)/H(+) antiporter NhaB (528 aa).

Helical transmembrane passes span 23–45, 66–86, 95–115, 139–159, 203–223, 241–261, 310–330, 349–369, 390–410, 448–468, and 476–496; these read FAILSFLVINPVVFYLNPFVAGW, PGGLLAIEAVIIGMTSPSQVL, VLLLLIFMVAGIYFMKQLLLF, AFLSAFLDALTVIAVIIAVAV, LLMHAGVGTALGGVCTMVGEP, LRMSPVTVPVFVAGVLTCFLV, LIIGLAFHLASVGLIGLSVII, EEALPFTALLAVFFAIVGVII, LVIFYIAIGLLSMVSDNVFVG, ATPNGQAAFLFLLTSAIAPLI, and VWMALPYTIVLSIVGILAIQF.

Belongs to the NhaB Na(+)/H(+) (TC 2.A.34) antiporter family.

The protein resides in the cell inner membrane. The enzyme catalyses 2 Na(+)(in) + 3 H(+)(out) = 2 Na(+)(out) + 3 H(+)(in). Its function is as follows. Na(+)/H(+) antiporter that extrudes sodium in exchange for external protons. The sequence is that of Na(+)/H(+) antiporter NhaB from Shewanella piezotolerans (strain WP3 / JCM 13877).